The primary structure comprises 155 residues: Small ribosomal subunit protein uS15 (155 aa).

Basic residues predominate over residues 1–10; that stretch reads MARMHTRRRG. The segment at 1–66 is disordered; that stretch reads MARMHTRRRG…EGVQGTPVPD (66 aa). Residues 21 to 33 are compositionally biased toward acidic residues; sequence EPPEWSDVDEDAI. The segment covering 34-45 has biased composition (basic and acidic residues); it reads EERVVELAEQGH.

This sequence belongs to the universal ribosomal protein uS15 family. As to quaternary structure, part of the 30S ribosomal subunit.

This chain is Small ribosomal subunit protein uS15, found in Halobacterium salinarum (strain ATCC 700922 / JCM 11081 / NRC-1) (Halobacterium halobium).